The following is a 101-amino-acid chain: Small ribosomal subunit protein uS10 (101 aa).

It belongs to the universal ribosomal protein uS10 family. Part of the 30S ribosomal subunit.

In terms of biological role, involved in the binding of tRNA to the ribosomes. The sequence is that of Small ribosomal subunit protein uS10 from Corynebacterium efficiens (strain DSM 44549 / YS-314 / AJ 12310 / JCM 11189 / NBRC 100395).